The following is a 591-amino-acid chain: L-fucose isomerase (591 aa).

Residues Glu337 and Asp361 each act as proton acceptor in the active site. Residues Glu337, Asp361, and His528 each contribute to the Mn(2+) site.

It belongs to the L-fucose isomerase family. In terms of assembly, homohexamer. Requires Mn(2+) as cofactor.

The protein localises to the cytoplasm. It carries out the reaction L-fucose = L-fuculose. Its pathway is carbohydrate degradation; L-fucose degradation; L-lactaldehyde and glycerone phosphate from L-fucose: step 1/3. Its function is as follows. Converts the aldose L-fucose into the corresponding ketose L-fuculose. The chain is L-fucose isomerase from Klebsiella pneumoniae (strain 342).